Here is a 430-residue protein sequence, read N- to C-terminus: MFENLCTLPLSSELFTQALHPTEPILSVGLSSGHVQCFRLPAAEAAAEDEDGDTSVVSTGTSTIDTEWRTRRHKGSCRTLGYNHDGEVLYSAGTDSLLKAAASSTGQVTSKILIPNTNTDKLDPPTLLHALSPQTLLLTTDSCALHLYDLRDNSSFKSGKPAQTHYPHDDYISSLSPLPPTEMSTSGFSKQWITTGGTTLAVTDLRRGVLVKSEDQEEELLSSVFVGGLPARGKYGREKVCVGNGNGVITLWEKGVWDDQSERIIVDGGGKAGGESLDAMIAMPEELEGGYGGKCVVVGCGDGSVRIVRVGGTKGVVEDMKHDDIEAVVAVGFDVEGRLISGGGDTVKVWQEKVEEEEEEEEEEEQEDIEDNDDVMGGGGKHALERDSDDSDARADSSDEEDGGRKKRKKKKKGKKNQVGNGILKFKGME.

WD repeat units follow at residues 9 to 48, 72 to 111, 117 to 158, 215 to 262, 272 to 318, and 323 to 360; these read PLSS…AAAE, RHKG…VTSK, TNTD…SFKS, DQEE…DQSE, AGGE…GVVE, and DDIE…EEEE. Residues 356 to 374 are compositionally biased toward acidic residues; the sequence is EEEEEEEEEEQEDIEDNDD. Positions 356 to 430 are disordered; that stretch reads EEEEEEEEEE…NGILKFKGME (75 aa). A compositionally biased stretch (basic and acidic residues) spans 382-397; that stretch reads HALERDSDDSDARADS. Residues 405–416 show a composition bias toward basic residues; the sequence is RKKRKKKKKGKK.

This sequence belongs to the WD repeat WDR55 family.

It localises to the nucleus. The protein localises to the nucleolus. In Botryotinia fuckeliana (strain B05.10) (Noble rot fungus), this protein is WD repeat-containing protein jip5 (jip5).